The sequence spans 363 residues: Anhydro-N-acetylmuramic acid kinase (363 aa).

Residue 10-17 coordinates ATP; sequence GTSLDGMD.

It belongs to the anhydro-N-acetylmuramic acid kinase family.

The enzyme catalyses 1,6-anhydro-N-acetyl-beta-muramate + ATP + H2O = N-acetyl-D-muramate 6-phosphate + ADP + H(+). It functions in the pathway amino-sugar metabolism; 1,6-anhydro-N-acetylmuramate degradation. It participates in cell wall biogenesis; peptidoglycan recycling. Its function is as follows. Catalyzes the specific phosphorylation of 1,6-anhydro-N-acetylmuramic acid (anhMurNAc) with the simultaneous cleavage of the 1,6-anhydro ring, generating MurNAc-6-P. Is required for the utilization of anhMurNAc either imported from the medium or derived from its own cell wall murein, and thus plays a role in cell wall recycling. Contributes to intrinsic fosfomycin resistance in P.aeruginosa. In Pseudomonas aeruginosa (strain ATCC 15692 / DSM 22644 / CIP 104116 / JCM 14847 / LMG 12228 / 1C / PRS 101 / PAO1), this protein is Anhydro-N-acetylmuramic acid kinase.